We begin with the raw amino-acid sequence, 380 residues long: Queuine tRNA-ribosyltransferase (380 aa).

The active-site Proton acceptor is the Asp-95. Substrate-binding positions include 95 to 99 (DSGGF), Asp-149, Gln-192, and Gly-219. Positions 250–256 (GVGSPDA) are RNA binding. The Nucleophile role is filled by Asp-269. An RNA binding; important for wobble base 34 recognition region spans residues 274–278 (TRIAR). Zn(2+)-binding residues include Cys-307, Cys-309, Cys-312, and His-338.

It belongs to the queuine tRNA-ribosyltransferase family. Homodimer. Within each dimer, one monomer is responsible for RNA recognition and catalysis, while the other monomer binds to the replacement base PreQ1. Requires Zn(2+) as cofactor.

The catalysed reaction is 7-aminomethyl-7-carbaguanine + guanosine(34) in tRNA = 7-aminomethyl-7-carbaguanosine(34) in tRNA + guanine. It functions in the pathway tRNA modification; tRNA-queuosine biosynthesis. Functionally, catalyzes the base-exchange of a guanine (G) residue with the queuine precursor 7-aminomethyl-7-deazaguanine (PreQ1) at position 34 (anticodon wobble position) in tRNAs with GU(N) anticodons (tRNA-Asp, -Asn, -His and -Tyr). Catalysis occurs through a double-displacement mechanism. The nucleophile active site attacks the C1' of nucleotide 34 to detach the guanine base from the RNA, forming a covalent enzyme-RNA intermediate. The proton acceptor active site deprotonates the incoming PreQ1, allowing a nucleophilic attack on the C1' of the ribose to form the product. After dissociation, two additional enzymatic reactions on the tRNA convert PreQ1 to queuine (Q), resulting in the hypermodified nucleoside queuosine (7-(((4,5-cis-dihydroxy-2-cyclopenten-1-yl)amino)methyl)-7-deazaguanosine). In Pediococcus pentosaceus (strain ATCC 25745 / CCUG 21536 / LMG 10740 / 183-1w), this protein is Queuine tRNA-ribosyltransferase.